The following is a 125-amino-acid chain: SOSS complex subunit C homolog (125 aa).

The interval 43–77 is disordered; that stretch reads MPSPQLLGQPTVAPEFLPQGVGLPTNATPPRSAFN. The segment covering 67–77 has biased composition (polar residues); the sequence is TNATPPRSAFN.

The protein belongs to the SOSS-C family.

The sequence is that of SOSS complex subunit C homolog from Drosophila persimilis (Fruit fly).